We begin with the raw amino-acid sequence, 923 residues long: Ubiquitin carboxyl-terminal hydrolase 10 (923 aa).

Positions 19–134 (FTPEEEKRIV…GGPPIERKLI (116 aa)) constitute a DUSP domain. The tract at residues 65 to 91 (NECSTGESSEAPRPGPIDNHDIIESDS) is disordered. Positions 304–895 (AGLSNLGNTC…AAYVLFYRRV (592 aa)) constitute a USP domain. C313 serves as the catalytic Nucleophile. H853 serves as the catalytic Proton acceptor.

The protein belongs to the peptidase C19 family.

The catalysed reaction is Thiol-dependent hydrolysis of ester, thioester, amide, peptide and isopeptide bonds formed by the C-terminal Gly of ubiquitin (a 76-residue protein attached to proteins as an intracellular targeting signal).. Functionally, recognizes and hydrolyzes the peptide bond at the C-terminal Gly of ubiquitin. Involved in the processing of poly-ubiquitin precursors as well as that of ubiquitinated proteins. This Arabidopsis thaliana (Mouse-ear cress) protein is Ubiquitin carboxyl-terminal hydrolase 10 (UBP10).